Reading from the N-terminus, the 292-residue chain is MPRRLCALLLLASQCLGSTAGLFPFGEPDFSYKRSNCKPIPAPMLLCRGIEYQSMRLPNLLGHETVQEVLEQATTWIPLVQKQCHPDTRKFLCSLFAPVCIDDLDEIIQPCHSLCEEVKESCAPVMSAFGFPWPDMLDCSRFPKDNDLCIPLASSDHILPVTREAPKVCDACKNKNEDDNDIMENLCKNDFALKIKVKEIAYINGDTKITPETKSKTIYKLNGLTERDLRKIVLWLKGGLQCTCDEMNDINVPYLVMGQKQAGELVITSLKRWQKGQRAFKRFSRSIRKLQC.

A signal peptide spans 1-20 (MPRRLCALLLLASQCLGSTA). An FZ domain is found at 32–152 (YKRSNCKPIP…PKDNDLCIPL (121 aa)). Disulfide bonds link C37–C100, C47–C93, C84–C122, C111–C149, C115–C139, C169–C242, and C187–C292. Residues 169–292 (CDACKNKNED…FSRSIRKLQC (124 aa)) form the NTR domain.

This sequence belongs to the secreted frizzled-related protein (sFRP) family.

It localises to the secreted. Its function is as follows. Soluble frizzled-related proteins (sFRPS) function as modulators of Wnt signaling through direct interaction with Wnts. They have a role in regulating cell growth and differentiation in specific cell types. SFRP2 appears to be associated with myogenesis. In Gallus gallus (Chicken), this protein is Secreted frizzled-related protein 2 (SFRP2).